The sequence spans 319 residues: Ferrochelatase (319 aa).

2 residues coordinate Fe cation: H193 and E274.

Belongs to the ferrochelatase family.

It is found in the cytoplasm. It carries out the reaction heme b + 2 H(+) = protoporphyrin IX + Fe(2+). The protein operates within porphyrin-containing compound metabolism; protoheme biosynthesis; protoheme from protoporphyrin-IX: step 1/1. Its function is as follows. Catalyzes the ferrous insertion into protoporphyrin IX. The polypeptide is Ferrochelatase (Erwinia tasmaniensis (strain DSM 17950 / CFBP 7177 / CIP 109463 / NCPPB 4357 / Et1/99)).